The chain runs to 374 residues: bZIP transcription factor TRAB1 (374 aa).

Residues 1-13 are compositionally biased toward basic and acidic residues; that stretch reads MDLKDGGGSERRG. Disordered regions lie at residues 1–23 and 117–142; these read MDLK…AGAA and ASPG…QPTL. The segment covering 14–23 has biased composition (low complexity); the sequence is AAAGAGAGAA. The 64-residue stretch at 286-349 folds into the bZIP domain; it reads VERRQRRMIK…KNFFPEMQKN (64 aa). Positions 288 to 307 are basic motif; it reads RRQRRMIKNRESAARSRARK. The segment at 314–335 is leucine-zipper; that stretch reads LEAEVQKLKEQNMELQKKQEEI.

It belongs to the bZIP family. As to quaternary structure, interacts with VP1 (via N-terminus). As to expression, expressed in roots, leaves and embryos.

It localises to the nucleus. In terms of biological role, transcription activator that mediates abscisic acid (ABA) signaling. Binds specifically to the ABA-responsive element (ABRE) of the EMP1 and RAB16A gene promoters. The protein is bZIP transcription factor TRAB1 of Oryza sativa subsp. japonica (Rice).